The sequence spans 483 residues: Phosphoenolpyruvate carboxylase (483 aa).

Residues 1 to 20 (MKVPRCMSTQHPDNVNPPFF) are disordered.

It belongs to the PEPCase type 2 family. In terms of assembly, homotetramer. Mg(2+) is required as a cofactor.

It catalyses the reaction oxaloacetate + phosphate = phosphoenolpyruvate + hydrogencarbonate. With respect to regulation, inhibited by NaCl, KCl, ATP, ADP, GTP and aspartate. Unlike E.coli, not regulated by acetyl-CoA. Its function is as follows. Catalyzes the irreversible beta-carboxylation of phosphoenolpyruvate (PEP) to form oxaloacetate (OAA), a four-carbon dicarboxylic acid source for the tricarboxylic acid cycle. The protein is Phosphoenolpyruvate carboxylase (ppcA) of Methanothermobacter thermautotrophicus (strain ATCC 29096 / DSM 1053 / JCM 10044 / NBRC 100330 / Delta H) (Methanobacterium thermoautotrophicum).